A 702-amino-acid polypeptide reads, in one-letter code: Arylphorin (702 aa).

The N-terminal stretch at 1-16 (MQTVLFLAALVSLAAA) is a signal peptide. N-linked (GlcNAc...) asparagine glycosylation is found at Asn-211 and Asn-481.

This sequence belongs to the hemocyanin family. As to expression, hemolymph.

The protein localises to the secreted. Functionally, larval storage protein (LSP) which may serve as a store of amino acids for synthesis of adult proteins. Binds the A.niger cell wall component alpha-1,3-glucan, a fungal pathogen-associated molecular pattern (PAMP) that activates the host immune response. This Galleria mellonella (Greater wax moth) protein is Arylphorin (LOC113516268).